A 381-amino-acid polypeptide reads, in one-letter code: Guanine nucleotide-binding protein subunit alpha-12 (381 aa).

A lipid anchor (S-palmitoyl cysteine) is attached at Cys-11. One can recognise a G-alpha domain in the interval 56 to 381; the sequence is RLVKILLLGA…QENLKDIMLQ (326 aa). The interval 59–72 is G1 motif; the sequence is KILLLGAGESGKST. Residues 67-72 and 202-205 contribute to the GTP site; these read ESGKST and LLAR. Ser-71 contacts Mg(2+). Residues 200-208 are G2 motif; sequence DILLARKAT. Thr-208 lines the Mg(2+) pocket. Thr-208 bears the Phosphothreonine mark. Positions 223-232 are G3 motif; sequence FKMVDVGGQR. Residues 292 to 299 are G4 motif; sequence ILFLNKMD. Residues 296 to 299 and Ala-353 contribute to the GTP site; that span reads NKMD. The segment at 351–356 is G5 motif; the sequence is TTAIDT.

It belongs to the G-alpha family. G(12) subfamily. As to quaternary structure, g proteins are composed of 3 units; alpha, beta and gamma. The alpha chain contains the guanine nucleotide binding site. Interacts with UBXD5. Interacts (in GTP-bound form) with PPP5C (via TPR repeats); activates PPP5C phosphatase activity and translocates PPP5C to the cell membrane. Interacts with RGS22. Interacts (via N-terminus) with NAPA; the interaction promotes CDH5 localization to plasma membrane. Interacts with CTNND1 (via N-terminus); the interaction regulates CDH1-mediated cell-cell adhesion. Interacts with PPP2R1A; the interaction promotes protein phosphatase 2A activation causing dephosphorylation of MAPT. Interacts (in GTP-bound form) with ARHGEF1. Interacts (in GTP-bound form) with ARHGEF11 (via RGS domain). Interacts (in GTP-bound form) with ARHGEF12 (via RGS domain).

Its subcellular location is the cell membrane. The protein localises to the lateral cell membrane. It is found in the cytoplasm. Its function is as follows. Guanine nucleotide-binding proteins (G proteins) are involved as modulators or transducers in various transmembrane signaling systems. Activates effector molecule RhoA by binding and activating RhoGEFs (ARHGEF12/LARG). GNA12-dependent Rho signaling subsequently regulates transcription factor AP-1 (activating protein-1). GNA12-dependent Rho signaling also regulates protein phosphatese 2A activation causing dephosphorylation of its target proteins. Promotes tumor cell invasion and metastasis by activating RhoA/ROCK signaling pathway and up-regulating pro-inflammatory cytokine production. Inhibits CDH1-mediated cell adhesion in process independent from Rho activation. Together with NAPA promotes CDH5 localization to plasma membrane. May play a role in the control of cell migration through the TOR signaling cascade. This chain is Guanine nucleotide-binding protein subunit alpha-12 (GNA12), found in Homo sapiens (Human).